Consider the following 278-residue polypeptide: 4-hydroxy-tetrahydrodipicolinate reductase (278 aa).

Residues 13–18 (GAAGKM) and 111–113 (GTT) each bind NAD(+). The active-site Proton donor/acceptor is H167. H168 lines the (S)-2,3,4,5-tetrahydrodipicolinate pocket. The active-site Proton donor is the K171. 177-178 (GT) is a (S)-2,3,4,5-tetrahydrodipicolinate binding site.

Belongs to the DapB family.

It localises to the cytoplasm. It carries out the reaction (S)-2,3,4,5-tetrahydrodipicolinate + NAD(+) + H2O = (2S,4S)-4-hydroxy-2,3,4,5-tetrahydrodipicolinate + NADH + H(+). The catalysed reaction is (S)-2,3,4,5-tetrahydrodipicolinate + NADP(+) + H2O = (2S,4S)-4-hydroxy-2,3,4,5-tetrahydrodipicolinate + NADPH + H(+). It participates in amino-acid biosynthesis; L-lysine biosynthesis via DAP pathway; (S)-tetrahydrodipicolinate from L-aspartate: step 4/4. Catalyzes the conversion of 4-hydroxy-tetrahydrodipicolinate (HTPA) to tetrahydrodipicolinate. The polypeptide is 4-hydroxy-tetrahydrodipicolinate reductase (Trichormus variabilis (strain ATCC 29413 / PCC 7937) (Anabaena variabilis)).